The chain runs to 113 residues: Histone H2B (113 aa).

A disordered region spans residues 1–21 (MPATPAKRAKRVQQEKRHHKK). The span at 7-21 (KRAKRVQQEKRHHKK) shows a compositional bias: basic residues. Lysine 109 participates in a covalent cross-link: Glycyl lysine isopeptide (Lys-Gly) (interchain with G-Cter in ubiquitin).

Belongs to the histone H2B family. In terms of assembly, the nucleosome is a histone octamer containing two molecules each of H2A, H2B, H3 and H4 assembled in one H3-H4 heterotetramer and two H2A-H2B heterodimers. The octamer wraps approximately 147 bp of DNA. Post-translationally, monoubiquitination of Lys-109 gives a specific tag for epigenetic transcriptional activation and is also prerequisite for histone H3 'Lys-4' and 'Lys-79' methylation.

It is found in the nucleus. The protein resides in the chromosome. Core component of nucleosome. Nucleosomes wrap and compact DNA into chromatin, limiting DNA accessibility to the cellular machineries which require DNA as a template. Histones thereby play a central role in transcription regulation, DNA repair, DNA replication and chromosomal stability. DNA accessibility is regulated via a complex set of post-translational modifications of histones, also called histone code, and nucleosome remodeling. The protein is Histone H2B (H2B1) of Euplotes crassus.